Consider the following 286-residue polypeptide: Transcription factor MYB62 (286 aa).

HTH myb-type domains are found at residues 16-68 (DEEL…LNYL) and 69-123 (KPDI…QKQA). DNA-binding regions (H-T-H motif) lie at residues 44 to 68 (WNHV…LNYL) and 96 to 119 (WSKI…RTRV).

Expressed in leaves and flowers.

The protein resides in the nucleus. Its function is as follows. Transcription repressor of phosphate (Pi) starvation-induced genes. Negatively regulates Pi starvation responses via the repression of gibberellic acid (GA) biosynthesis and signaling. Modulates root architecture, phosphatase activity, and Pi uptake and accumulation. This chain is Transcription factor MYB62, found in Arabidopsis thaliana (Mouse-ear cress).